We begin with the raw amino-acid sequence, 574 residues long: MKDMSNKKIFKKYSRVAGLLTAALIVGNLVTANADSNKQNTANTETTTTNEQPKPESSELTTEKAGQKMDDMLNSNDMIKLAPKEMPLESAEKEEKKSEDNKKSEEDHTEEINDKIYSLNYNELEVLAKNGETIENFVPKEGVKKADKFIVIERKKKNINTTPVDISIIDSVTDRTYPAALQLANKGFTENKPDAVVTKRNPQKIHIDLPGMGDKATVEVNDPTYANVSTAIDNLVNQWHDNYSGGNTLPARTQYTESMVYSKSQIEAALNVNSKILDGTLGIDFKSISKGEKKVMIAAYKQIFYTVSANLPNNPADVFDKSVTFKELQAKGVSNEAPPLFVSNVAYGRTVFVKLETSSKSNDVEAAFSAALKGTDVKTNGKYSDILENSSFTAVVLGADAAEHNKVVTKDFDVIRNVIKANATFSRKNPAYPISYTSVFLKNNKIAGVNNRSEYVETTSTEYTSGKINLSHQGAYVAQYEILWDEINYDDKGKEVITKRRWDNNWYSKTSPFSTVIPLGANSRNIRIMARECTGLAWEWWRKVIDERDVKLSKEINVNISGSTLSPYGSITYK.

The signal sequence occupies residues 1–36 (MKDMSNKKIFKKYSRVAGLLTAALIVGNLVTANADS). Residues 37-52 (NKQNTANTETTTTNEQ) show a composition bias toward low complexity. Disordered stretches follow at residues 37–64 (NKQN…TTEK) and 84–111 (KEMP…HTEE). Residues 53–64 (PKPESSELTTEK) are compositionally biased toward basic and acidic residues. 4 consecutive transmembrane segments (beta stranded) span residues 263–276 (KSQI…NSKI), 283–292 (IDFKSISKGE), 361–370 (SNDVEAAFSA), and 378–390 (KTNG…LENS). The Conserved undecapeptide motif lies at 532–542 (ECTGLAWEWWR). A Cholesterol binding motif is present at residues 564-565 (TL).

It belongs to the cholesterol-dependent cytolysin family. In terms of assembly, homooligomeric pore complex of 35 to 50 subunits; when inserted in the host membrane.

The protein localises to the secreted. It localises to the host cell membrane. In terms of biological role, a cholesterol-dependent toxin that causes cytolysis by forming pores in cholesterol containing host membranes. After binding to target membranes, the protein undergoes a major conformation change, leading to its insertion in the host membrane and formation of an oligomeric pore complex. Cholesterol is required for binding to host membranes, membrane insertion and pore formation; cholesterol binding is mediated by a Thr-Leu pair in the C-terminus. Can be reversibly inactivated by oxidation. This is Streptolysin O (slo) from Streptococcus canis.